The chain runs to 497 residues: Ganglioside-induced differentiation-associated protein 2 (497 aa).

A Macro domain is found at 43–223 (RSPFLYNKDI…TYQKLLPLYF (181 aa)). A disordered region spans residues 251–273 (PERQIRISEKPGAPEDNQEEEDE). The segment covering 253–263 (RQIRISEKPGA) has biased composition (basic and acidic residues). Phosphoserine is present on serine 280. The CRAL-TRIO domain occupies 333-481 (DIASLKALYQ…FPPFVLEYDA (149 aa)).

It belongs to the GDAP2 family.

The protein is Ganglioside-induced differentiation-associated protein 2 (GDAP2) of Bos taurus (Bovine).